A 141-amino-acid chain; its full sequence is Transmembrane protein 216 (141 aa).

Helical transmembrane passes span 15-35 (VLFF…LLIF), 49-69 (LVLD…RLFF), 82-102 (LGIS…YLLL), and 115-135 (SILL…LATF).

In terms of assembly, part of the tectonic-like complex (also named B9 complex). Interacts with TMEM107.

The protein localises to the membrane. It is found in the cytoplasm. The protein resides in the cytoskeleton. It localises to the cilium basal body. In terms of biological role, part of the tectonic-like complex which is required for tissue-specific ciliogenesis and may regulate ciliary membrane composition. The sequence is that of Transmembrane protein 216 (Tmem216) from Mus musculus (Mouse).